Reading from the N-terminus, the 289-residue chain is Xylosylprotein 4-beta-galactosyltransferase (289 aa).

At 1–6 the chain is on the cytoplasmic side; that stretch reads MKLKTR. A helical; Signal-anchor for type II membrane protein membrane pass occupies residues 7 to 27; that stretch reads LILSGTILISLAACYFLVLLV. Residues 28-289 lie on the Lumenal side of the membrane; sequence LDLEITRDLM…DLNWTPYCKS (262 aa). 58–62 serves as a coordination point for UDP-alpha-D-galactose; that stretch reads PYRDR. N-linked (GlcNAc...) asparagine glycans are attached at residues N81 and N90. UDP-alpha-D-galactose contacts are provided by residues 97-99, 123-124, Y154, and W184; these read FNR and VD. Position 124 (D124) interacts with Mn(2+). 186–189 is a binding site for N-acetyl-D-glucosamine; sequence LEDD. N-linked (GlcNAc...) asparagine glycosylation is present at N201. Residues 214–236 form a disordered region; that stretch reads NTFRHIHGPKRKRDYTPKKNDKN. The segment covering 217 to 226 has biased composition (basic residues); it reads RHIHGPKRKR. H218 contacts Mn(2+). 218 to 220 contacts UDP-alpha-D-galactose; sequence HIH. Residues 227-236 show a composition bias toward basic and acidic residues; the sequence is DYTPKKNDKN.

It belongs to the glycosyltransferase 7 family. The cofactor is Mn(2+).

Its subcellular location is the membrane. It carries out the reaction 3-O-(beta-D-xylosyl)-L-seryl-[protein] + UDP-alpha-D-galactose = 3-O-(beta-D-galactosyl-(1-&gt;4)-beta-D-xylosyl)-L-seryl-[protein] + UDP + H(+). It participates in protein modification; protein glycosylation. Functionally, glycosyltransferase required for the biosynthesis of the tetrasaccharide (GlcA-Gal-Gal-Xyl-)Ser core linker of heparan sulfate and chondroitin sulfate. Required for embryonic development. Involved in vulval epithelium invagination. Required for axon regeneration after injury. In Caenorhabditis elegans, this protein is Xylosylprotein 4-beta-galactosyltransferase (sqv-3).